Consider the following 171-residue polypeptide: Large ribosomal subunit protein uL10 (171 aa).

Belongs to the universal ribosomal protein uL10 family. Part of the ribosomal stalk of the 50S ribosomal subunit. The N-terminus interacts with L11 and the large rRNA to form the base of the stalk. The C-terminus forms an elongated spine to which L12 dimers bind in a sequential fashion forming a multimeric L10(L12)X complex.

Functionally, forms part of the ribosomal stalk, playing a central role in the interaction of the ribosome with GTP-bound translation factors. The chain is Large ribosomal subunit protein uL10 from Corynebacterium glutamicum (strain ATCC 13032 / DSM 20300 / JCM 1318 / BCRC 11384 / CCUG 27702 / LMG 3730 / NBRC 12168 / NCIMB 10025 / NRRL B-2784 / 534).